The sequence spans 127 residues: MSKPLKFLLWSSLALLLLQIGSGAICEGKSSEPAVRQTQVKWREGKKFRVEVMNKCPMCPIINLRLKCQGFPQSLVDPTFLRVLSSSAGNCVVNDGLPLSPMQTLSFNYSNTHQFALRPLSWSFQCE.

The N-terminal stretch at 1-23 (MSKPLKFLLWSSLALLLLQIGSG) is a signal peptide.

This is an uncharacterized protein from Arabidopsis thaliana (Mouse-ear cress).